A 437-amino-acid chain; its full sequence is Adenylosuccinate synthetase (437 aa).

Residues G12–K18 and G40–T42 contribute to the GTP site. D13 (proton acceptor) is an active-site residue. Mg(2+) is bound by residues D13 and G40. IMP contacts are provided by residues D13 to K16, N38 to H41, T128, R142, Q223, T238, and R302. H41 (proton donor) is an active-site residue. T298–R304 provides a ligand contact to substrate. Residues R304, K330–D332, and S412–G414 each bind GTP.

This sequence belongs to the adenylosuccinate synthetase family. In terms of assembly, homodimer. It depends on Mg(2+) as a cofactor.

The protein resides in the cytoplasm. It carries out the reaction IMP + L-aspartate + GTP = N(6)-(1,2-dicarboxyethyl)-AMP + GDP + phosphate + 2 H(+). The protein operates within purine metabolism; AMP biosynthesis via de novo pathway; AMP from IMP: step 1/2. In terms of biological role, plays an important role in the de novo pathway of purine nucleotide biosynthesis. Catalyzes the first committed step in the biosynthesis of AMP from IMP. This is Adenylosuccinate synthetase from Prochlorococcus marinus (strain NATL1A).